The following is a 257-amino-acid chain: Gamma-secretase subunit APH-1B (257 aa).

7 helical membrane-spanning segments follow: residues 5-25, 32-52, 71-91, 115-135, 158-178, 186-206, and 213-233; these read VFFGCAFIAFGPALALYVFTI, IIFLIAGAFFWLVSLLISSLV, LLIFGAFVSVYIQEMFRFAYY, LLAYVSGLGFGIMSGVFSFVN, YSAFMTLVIILLHVFWGIVFF, WGILLIVLLTHLLVSAQTFIS, and LASAFIILVLMGTWAFLAAGG.

It belongs to the APH-1 family. As to quaternary structure, probable component of the gamma-secretase complex, a complex composed of a presenilin homodimer (PSEN1 or PSEN2), nicastrin (NCSTN), APH1 (APH1A or APH1B) and PEN2. Such minimal complex is sufficient for secretase activity, although other components may exist. Interacts with PSEN1 and PSEN2. As to expression, weakly or not expressed in leukocytes, lung, placenta, small intestine, liver, kidney, spleen thymus, colon, skeletal muscle, heart and brain.

It is found in the membrane. Its function is as follows. Probable subunit of the gamma-secretase complex, an endoprotease complex that catalyzes the intramembrane cleavage of integral proteins such as Notch receptors and APP (amyloid-beta precursor protein). It probably represents a stabilizing cofactor for the presenilin homodimer that promotes the formation of a stable complex. Probably present in a minority of gamma-secretase complexes compared to APH1A. The chain is Gamma-secretase subunit APH-1B (APH1B) from Homo sapiens (Human).